A 300-amino-acid polypeptide reads, in one-letter code: Heme A synthase (300 aa).

Topologically, residues 1-8 (MLKEKNLK) are cytoplasmic. The helical transmembrane segment at 9-29 (WLSLFTTVLMLFVQIGGALVT) threads the bilayer. Residues 30 to 64 (KTGSADGCGSSWPLCHGKFVPTHIPKETLIELAHR) lie on the Extracellular side of the membrane. An intrachain disulfide couples C37 to C44. The active site involves E60. Heme o is bound at residue H63. A helical transmembrane segment spans residues 65 to 85 (GVSGLALLSVTWLVILSIKYI). Residues 86–92 (GHKKETK) are Cytoplasmic-facing. A helical membrane pass occupies residues 93 to 113 (FLCYMSIGFIFAQALIGAAAV). The Extracellular portion of the chain corresponds to 114 to 123 (MWQQNGFVLA). Residues 124–144 (LHFGISLISFSAVFLLTLLIF) traverse the membrane as a helical segment. Residue H125 coordinates heme o. Residues 145–163 (EVDQKFDATKLILQPKLRR) are Cytoplasmic-facing. Residues 164 to 184 (HTIGLTSFIYFVIYSGALVRH) traverse the membrane as a helical segment. At 185–218 (EKASLACSSWPLCRKGAFILPQNFYEWVQMSHRT) the chain is on the extracellular side. Cysteines 191 and 197 form a disulfide. A heme b-binding site is contributed by H216. A helical transmembrane segment spans residues 219–239 (LAFILFIWLTYVAFHAMRNYA). At 240–249 (QYRVIKYGYM) the chain is on the cytoplasmic side. Residues 250-270 (IAFILICLQVTTGALTIFTAV) form a helical membrane-spanning segment. Topologically, residues 271-275 (NLYIA) are extracellular. The helical transmembrane segment at 276–296 (LLHALFITLLFGLLCYFILLI) threads the bilayer. H278 contributes to the heme b binding site. The Cytoplasmic portion of the chain corresponds to 297–300 (SRAK).

It belongs to the COX15/CtaA family. Type 1 subfamily. In terms of assembly, interacts with CtaB. The cofactor is heme b.

The protein resides in the cell membrane. It catalyses the reaction Fe(II)-heme o + 2 A + H2O = Fe(II)-heme a + 2 AH2. It functions in the pathway porphyrin-containing compound metabolism; heme A biosynthesis; heme A from heme O: step 1/1. Functionally, catalyzes the conversion of heme O to heme A by two successive hydroxylations of the methyl group at C8. The first hydroxylation forms heme I, the second hydroxylation results in an unstable dihydroxymethyl group, which spontaneously dehydrates, resulting in the formyl group of heme A. This chain is Heme A synthase, found in Macrococcus caseolyticus (strain JCSC5402) (Macrococcoides caseolyticum).